Here is a 1194-residue protein sequence, read N- to C-terminus: Peroxisomal ATPase PEX1 (1194 aa).

The interval 220–255 (KTRQRRMSHQGKSVKAKSLASTRHGKRRDDGSGPSG) is disordered. The segment covering 221-234 (TRQRRMSHQGKSVK) has biased composition (basic residues). The interval 538-730 (RSASVLLTGA…GPEPTLKIEK (193 aa)) is AAA-cassette D1. Residues 546–553 (GARGSGKT) and 849–856 (GYPGCGKT) each bind ATP. Positions 844 to 1028 (GLLLYGYPGC…LYNAHLEAIH (185 aa)) are AAA-cassette D2. Disordered regions lie at residues 1062–1084 (YISFSMGNKDSTGEPSTQPLTNG), 1116–1139 (QVQQQQSQTNQAQEEEKGDDEPVI), and 1174–1194 (RSGEMPSGQSSTEIGGRSSLM). A compositionally biased stretch (polar residues) spans 1066–1084 (SMGNKDSTGEPSTQPLTNG). The segment covering 1116–1127 (QVQQQQSQTNQA) has biased composition (low complexity).

The protein belongs to the AAA ATPase family. Interacts with PEX6; forming the PEX1-PEX6 AAA ATPase complex, which is composed of a heterohexamer formed by a trimer of PEX1-PEX6 dimers.

It localises to the cytoplasm. The protein localises to the cytosol. The protein resides in the peroxisome membrane. It catalyses the reaction ATP + H2O = ADP + phosphate + H(+). Component of the PEX1-PEX6 AAA ATPase complex, a protein dislocase complex that mediates the ATP-dependent extraction of the PEX5 receptor from peroxisomal membranes, an essential step for PEX5 recycling. Specifically recognizes PEX5 monoubiquitinated at 'Cys-6', and pulls it out of the peroxisome lumen through the PEX2-PEX10-PEX12 retrotranslocation channel. Extraction by the PEX1-PEX6 AAA ATPase complex is accompanied by unfolding of the TPR repeats and release of bound cargo from PEX5. Regulates autophagy and biogenesis of peroxisomes and Woronin bodies. Plays important roles in mycelial growth and development and stress response. Is also essential for conidiation and fatty acid utilization. Required for nematode predation via trap formation. The protein is Peroxisomal ATPase PEX1 of Arthrobotrys oligospora (strain ATCC 24927 / CBS 115.81 / DSM 1491) (Nematode-trapping fungus).